A 547-amino-acid chain; its full sequence is ATP synthase subunit alpha (547 aa).

172-179 (GDRKTGKT) lines the ATP pocket.

It belongs to the ATPase alpha/beta chains family. F-type ATPases have 2 components, CF(1) - the catalytic core - and CF(0) - the membrane proton channel. CF(1) has five subunits: alpha(3), beta(3), gamma(1), delta(1), epsilon(1). CF(0) has three main subunits: a(1), b(2) and c(9-12). The alpha and beta chains form an alternating ring which encloses part of the gamma chain. CF(1) is attached to CF(0) by a central stalk formed by the gamma and epsilon chains, while a peripheral stalk is formed by the delta and b chains.

It is found in the cell membrane. It carries out the reaction ATP + H2O + 4 H(+)(in) = ADP + phosphate + 5 H(+)(out). Its function is as follows. Produces ATP from ADP in the presence of a proton gradient across the membrane. The alpha chain is a regulatory subunit. The chain is ATP synthase subunit alpha from Rhodococcus jostii (strain RHA1).